Consider the following 342-residue polypeptide: Spermidine synthase (342 aa).

The interval Met-9–Glu-42 is disordered. The region spanning Pro-52–Thr-289 is the PABS domain. Residue Gln-83 coordinates S-adenosyl 3-(methylsulfanyl)propylamine. A putrescine-binding site is contributed by Tyr-113. S-adenosyl 3-(methylsulfanyl)propylamine-binding positions include Gln-114, Asp-138, Glu-158, Asp-189–Gly-190, and Asp-208. Asp-208 acts as the Proton acceptor in catalysis. Putrescine is bound by residues Asp-208–Asp-211 and Tyr-277.

Belongs to the spermidine/spermine synthase family.

It carries out the reaction S-adenosyl 3-(methylsulfanyl)propylamine + putrescine = S-methyl-5'-thioadenosine + spermidine + H(+). Its pathway is amine and polyamine biosynthesis; spermidine biosynthesis; spermidine from putrescine: step 1/1. This Solanum lycopersicum (Tomato) protein is Spermidine synthase (SPDSYN).